The chain runs to 375 residues: Coproporphyrin III ferrochelatase (375 aa).

The Fe-coproporphyrin III site is built by S59 and Y128. The Fe(2+) site is built by H191 and E286.

Belongs to the ferrochelatase family.

The protein resides in the cytoplasm. It catalyses the reaction Fe-coproporphyrin III + 2 H(+) = coproporphyrin III + Fe(2+). Its pathway is porphyrin-containing compound metabolism; protoheme biosynthesis. Functionally, involved in coproporphyrin-dependent heme b biosynthesis. Catalyzes the insertion of ferrous iron into coproporphyrin III to form Fe-coproporphyrin III. This chain is Coproporphyrin III ferrochelatase, found in Streptomyces griseus subsp. griseus (strain JCM 4626 / CBS 651.72 / NBRC 13350 / KCC S-0626 / ISP 5235).